We begin with the raw amino-acid sequence, 390 residues long: Transaldolase (390 aa).

The active-site Schiff-base intermediate with substrate is the K135. EF-hand domains lie at 329–364 and 365–388; these read AFCHVVQEIFMLNDLDGDGCITREEWLGSDAVFDAL and DHDHDGRLLQEDVRSGLGAALALT. 10 residues coordinate Ca(2+): D342, D344, D346, C348, E353, D365, D367, D369, R371, and D376.

It belongs to the transaldolase family. Type 1 subfamily.

The protein localises to the cytoplasm. The enzyme catalyses D-sedoheptulose 7-phosphate + D-glyceraldehyde 3-phosphate = D-erythrose 4-phosphate + beta-D-fructose 6-phosphate. It participates in carbohydrate degradation; pentose phosphate pathway; D-glyceraldehyde 3-phosphate and beta-D-fructose 6-phosphate from D-ribose 5-phosphate and D-xylulose 5-phosphate (non-oxidative stage): step 2/3. Its function is as follows. Transaldolase is important for the balance of metabolites in the pentose-phosphate pathway. This is Transaldolase from Prochlorococcus marinus (strain MIT 9313).